The sequence spans 359 residues: Medium-wave-sensitive opsin 1 (359 aa).

Topologically, residues 1 to 47 (MAQQLTGEQTLDHYEDSTQASIFTYTNSNSTRGPFEGPNYHIAPRWV) are extracellular. The segment at 12–38 (DHYEDSTQASIFTYTNSNSTRGPFEGP) is required for 11-cis-retinal regeneration. A glycan (N-linked (GlcNAc...) asparagine) is linked at Asn29. The chain crosses the membrane as a helical span at residues 48-72 (YHLTSTWMILVVIASVFTNGLVLAA). Topologically, residues 73-84 (TMRFKKLRHPLN) are cytoplasmic. A helical membrane pass occupies residues 85–110 (WILVNLAVADLAETIIASTISVVNQI). Residues 111-124 (YGYFVLGHPLCVIE) lie on the Extracellular side of the membrane. Cysteines 121 and 198 form a disulfide. The helical transmembrane segment at 125-144 (GYIVSLCGITGLWSLAIISW) threads the bilayer. Residues 145 to 163 (ERWLVVCKPFGNVRFDAKL) are Cytoplasmic-facing. The helical transmembrane segment at 164 to 187 (ATVGIVFSWVWAAVWTAPPIFGWS) threads the bilayer. Residues 188 to 213 (RYWPYGLKTSCGPDVFSGTSYPGVQS) lie on the Extracellular side of the membrane. A helical transmembrane segment spans residues 214–241 (YMMVLMVTCCIFPLSIIVLCYLQVWLAI). At 242 to 263 (RAVAKQQKESESTQKAEKEVTR) the chain is on the cytoplasmic side. A helical transmembrane segment spans residues 264–287 (MVVVMVFAYCLCWGPYTFFACFAT). At 288 to 295 (AHPGYAFH) the chain is on the extracellular side. A helical membrane pass occupies residues 296–320 (PLVASLPSYFAKSATIYNPIIYVFM). Position 307 is an N6-(retinylidene)lysine (Lys307). The Cytoplasmic segment spans residues 321–359 (NRQFRNCILQLFGKKVDDSSELSSTSKTEVSSVSSVSPA).

It belongs to the G-protein coupled receptor 1 family. Opsin subfamily. Monomer. Homodimer. Homotetramer. O-glycosylated. In terms of processing, phosphorylated on some or all of the serine and threonine residues present in the C-terminal region. In terms of tissue distribution, expressed in cone photoreceptor cells.

Its subcellular location is the membrane. In terms of biological role, visual pigments are the light-absorbing molecules that mediate vision. They consist of an apoprotein, opsin, covalently linked to cis-retinal. May increase spectral sensitivity in dim light. This is Medium-wave-sensitive opsin 1 (Opn1mw) from Rattus norvegicus (Rat).